Reading from the N-terminus, the 321-residue chain is Methionyl-tRNA formyltransferase (321 aa).

112–115 is a binding site for (6S)-5,6,7,8-tetrahydrofolate; sequence SILP.

It belongs to the Fmt family.

It catalyses the reaction L-methionyl-tRNA(fMet) + (6R)-10-formyltetrahydrofolate = N-formyl-L-methionyl-tRNA(fMet) + (6S)-5,6,7,8-tetrahydrofolate + H(+). Its function is as follows. Attaches a formyl group to the free amino group of methionyl-tRNA(fMet). The formyl group appears to play a dual role in the initiator identity of N-formylmethionyl-tRNA by promoting its recognition by IF2 and preventing the misappropriation of this tRNA by the elongation apparatus. The polypeptide is Methionyl-tRNA formyltransferase (Shewanella piezotolerans (strain WP3 / JCM 13877)).